We begin with the raw amino-acid sequence, 478 residues long: Cysteine--tRNA ligase (478 aa).

C29 contributes to the Zn(2+) binding site. The 'HIGH' region signature appears at 31–41 (VTVYDYCHLGH). Residues C213, H238, and E242 each coordinate Zn(2+). Residues 270–274 (KMSKS) carry the 'KMSKS' region motif. K273 is an ATP binding site.

The protein belongs to the class-I aminoacyl-tRNA synthetase family. As to quaternary structure, monomer. The cofactor is Zn(2+).

The protein resides in the cytoplasm. It catalyses the reaction tRNA(Cys) + L-cysteine + ATP = L-cysteinyl-tRNA(Cys) + AMP + diphosphate. The polypeptide is Cysteine--tRNA ligase (Synechococcus sp. (strain ATCC 27144 / PCC 6301 / SAUG 1402/1) (Anacystis nidulans)).